The primary structure comprises 366 residues: Mannonate dehydratase (366 aa).

Belongs to the mannonate dehydratase family. Requires Fe(2+) as cofactor. The cofactor is Mn(2+).

It catalyses the reaction D-mannonate = 2-dehydro-3-deoxy-D-gluconate + H2O. It functions in the pathway carbohydrate metabolism; pentose and glucuronate interconversion. In terms of biological role, catalyzes the dehydration of D-mannonate. This is Mannonate dehydratase from Streptococcus suis (strain 98HAH33).